The primary structure comprises 359 residues: Alanine racemase, biosynthetic (359 aa).

The Proton acceptor; specific for D-alanine role is filled by lysine 34. The residue at position 34 (lysine 34) is an N6-(pyridoxal phosphate)lysine. Arginine 129 is a binding site for substrate. Tyrosine 255 (proton acceptor; specific for L-alanine) is an active-site residue. Substrate is bound at residue methionine 303.

This sequence belongs to the alanine racemase family. The cofactor is pyridoxal 5'-phosphate.

The catalysed reaction is L-alanine = D-alanine. Its pathway is amino-acid biosynthesis; D-alanine biosynthesis; D-alanine from L-alanine: step 1/1. It functions in the pathway cell wall biogenesis; peptidoglycan biosynthesis. Functionally, catalyzes the interconversion of L-alanine and D-alanine. Provides the D-alanine required for cell wall biosynthesis. The polypeptide is Alanine racemase, biosynthetic (alr) (Escherichia coli O6:H1 (strain CFT073 / ATCC 700928 / UPEC)).